The chain runs to 674 residues: RNA polymerase sigma factor RpoD (674 aa).

Residues 214–252 (AEGAAPAARRPASDEPEYDADGNPISRIDEEEDDDDSSN) form a disordered region. The sigma-70 factor domain-2 stretch occupies residues 440-510 (MVEANLRLVI…TRSIADQART (71 aa)). The Interaction with polymerase core subunit RpoC motif lies at 464–467 (DLIQ). A sigma-70 factor domain-3 region spans residues 519–595 (ETINKLVRTG…DKNAILPLDS (77 aa)). The tract at residues 608–661 (VLASLTPREERVLRMRFGIGMNTDHTLEEVGQQFSVTRERIRQIEAKALRKLKH) is sigma-70 factor domain-4. Residues 634–653 (LEEVGQQFSVTRERIRQIEA) constitute a DNA-binding region (H-T-H motif).

This sequence belongs to the sigma-70 factor family. RpoD/SigA subfamily. As to quaternary structure, interacts transiently with the RNA polymerase catalytic core.

The protein resides in the cytoplasm. Its function is as follows. Sigma factors are initiation factors that promote the attachment of RNA polymerase to specific initiation sites and are then released. This sigma factor is the primary sigma factor during exponential growth. The polypeptide is RNA polymerase sigma factor RpoD (Rhodobacter capsulatus (strain ATCC BAA-309 / NBRC 16581 / SB1003)).